The chain runs to 256 residues: L-tyrosine degradation gene cluster protein hmgX (256 aa).

The protein belongs to the TTC36 family.

Its subcellular location is the cytoplasm. In terms of biological role, part of the L-tyrosine degradation gene cluster that mediates the biosynthesis of the brownish pigment pyomelanin as an alternative melanin. The 4-hydroxyphenylpyruvate dioxygenase hppD catalyzes the conversion of 4-hydroxyphenylpyruvate to homogentisic acid (HGA). The protein hmgX is crucial for this conversion and thus, probably functions as an accessory factor to mediate specific activity of hppD. The homogentisate 1,2-dioxygenase hmgA is then involved in the cleavage of the aromatic ring of HGA and its conversion to 4-maleylacetoacetate. When hmgA activity is lowered by the cell wall integrity (CWI) signaling pathway, HGA accumulates and leads to the production of pyomelanin through benzoquinone acetic acid after oxidation and polymerization. On the opposite, in non-stress conditions, both hppD and hmgA activities are balanced and HGA is degraded into 4-maleylacetoacetate. 4-maleylacetoacetate is further converted to 4-fumarylacetoacetate by the maleylacetoacetate isomerase maiA, which is degraded into fumarate and acetoacetate by the fumarylacetoacetase fahA. This chain is L-tyrosine degradation gene cluster protein hmgX, found in Aspergillus fumigatus (strain ATCC MYA-4609 / CBS 101355 / FGSC A1100 / Af293) (Neosartorya fumigata).